Here is a 251-residue protein sequence, read N- to C-terminus: Triosephosphate isomerase (251 aa).

9–11 (NWK) is a substrate binding site. His-95 functions as the Electrophile in the catalytic mechanism. Glu-167 (proton acceptor) is an active-site residue. Substrate contacts are provided by residues Gly-173, Ser-213, and 234-235 (GG).

This sequence belongs to the triosephosphate isomerase family. Homodimer.

The protein localises to the cytoplasm. It carries out the reaction D-glyceraldehyde 3-phosphate = dihydroxyacetone phosphate. It functions in the pathway carbohydrate biosynthesis; gluconeogenesis. Its pathway is carbohydrate degradation; glycolysis; D-glyceraldehyde 3-phosphate from glycerone phosphate: step 1/1. Involved in the gluconeogenesis. Catalyzes stereospecifically the conversion of dihydroxyacetone phosphate (DHAP) to D-glyceraldehyde-3-phosphate (G3P). In Geobacter metallireducens (strain ATCC 53774 / DSM 7210 / GS-15), this protein is Triosephosphate isomerase.